We begin with the raw amino-acid sequence, 771 residues long: U3 small nucleolar RNA-associated protein 14 homolog A (771 aa).

Residues 23–49 (PKDYLLSESEDEGDNDGERKHQKLLEA) form a disordered region. A phosphoserine mark is found at Ser-29, Ser-31, Ser-52, Ser-77, and Ser-81. Positions 40-67 (ERKHQKLLEAISSLDGKNRRKLAERSEA) form a coiled coil. A Glycyl lysine isopeptide (Lys-Gly) (interchain with G-Cter in SUMO2) cross-link involves residue Lys-122. Residue Thr-205 is modified to Phosphothreonine. 2 coiled-coil regions span residues 216 to 290 (SLEE…EKAR) and 317 to 347 (LEARQAMQEQLSKNKELTQKLQVASESEEEE). Disordered stretches follow at residues 334–355 (TQKLQVASESEEEEGGTEDVEE) and 367–557 (MNAD…KKEQ). A compositionally biased stretch (acidic residues) spans 342-355 (ESEEEEGGTEDVEE). A compositionally biased stretch (basic and acidic residues) spans 399–436 (LEAHGVSESEGEERPVAEEEILLREFEERRSLRKRSEL). Residues Ser-405 and Ser-407 each carry the phosphoserine modification. Arg-433 is modified (citrulline). Phosphoserine occurs at positions 437 and 445. Lys-449 participates in a covalent cross-link: Glycyl lysine isopeptide (Lys-Gly) (interchain with G-Cter in SUMO2). Position 453 is a phosphoserine (Ser-453). The segment covering 504 to 529 (RPERVQTLEELEELGKEECFQNKELP) has biased composition (basic and acidic residues). Residue Lys-519 forms a Glycyl lysine isopeptide (Lys-Gly) (interchain with G-Cter in SUMO2) linkage. Positions 535–544 (GQQSERTPNN) are enriched in polar residues. A compositionally biased stretch (basic and acidic residues) spans 547 to 557 (DAPKEKKKKEQ). At Ser-569 the chain carries Phosphoserine. Arg-589 is subject to Citrulline. Lys-733 participates in a covalent cross-link: Glycyl lysine isopeptide (Lys-Gly) (interchain with G-Cter in SUMO2). Residues 740-751 (RSSSRSDLSVIQ) are compositionally biased toward polar residues. A disordered region spans residues 740–771 (RSSSRSDLSVIQRNPKRITTRHKKQLKKCSVD). Residues 753–771 (NPKRITTRHKKQLKKCSVD) show a composition bias toward basic residues.

Belongs to the UTP14 family. In terms of assembly, interacts with DHX37. In terms of processing, citrullinated by PADI4. In terms of tissue distribution, ubiquitously expressed.

It is found in the nucleus. It localises to the nucleolus. May be required for ribosome biogenesis. In Homo sapiens (Human), this protein is U3 small nucleolar RNA-associated protein 14 homolog A (UTP14A).